We begin with the raw amino-acid sequence, 102 residues long: NADH-quinone oxidoreductase subunit K (102 aa).

3 helical membrane passes run 5-25, 31-51, and 62-82; these read LAHYLVLGAILFAIGIFGIFL, IILLMSIELVLLAVNMNFVAF, and VFVFFILTVAAAEAAIGLAIL.

This sequence belongs to the complex I subunit 4L family. As to quaternary structure, NDH-1 is composed of 14 different subunits. Subunits NuoA, H, J, K, L, M, N constitute the membrane sector of the complex.

The protein localises to the cell inner membrane. It carries out the reaction a quinone + NADH + 5 H(+)(in) = a quinol + NAD(+) + 4 H(+)(out). Functionally, NDH-1 shuttles electrons from NADH, via FMN and iron-sulfur (Fe-S) centers, to quinones in the respiratory chain. The immediate electron acceptor for the enzyme in this species is believed to be ubiquinone. Couples the redox reaction to proton translocation (for every two electrons transferred, four hydrogen ions are translocated across the cytoplasmic membrane), and thus conserves the redox energy in a proton gradient. This chain is NADH-quinone oxidoreductase subunit K, found in Bordetella petrii (strain ATCC BAA-461 / DSM 12804 / CCUG 43448).